The sequence spans 88 residues: Apolipoprotein C-I (88 aa).

The N-terminal stretch at 1–26 (MRLFISLPVLIVVLAMALEGPAPAQA) is a signal peptide.

The protein belongs to the apolipoprotein C1 family.

Its subcellular location is the secreted. Inhibitor of lipoprotein binding to the low density lipoprotein (LDL) receptor, LDL receptor-related protein, and very low density lipoprotein (VLDL) receptor. Associates with high density lipoproteins (HDL) and the triacylglycerol-rich lipoproteins in the plasma and makes up about 10% of the protein of the VLDL and 2% of that of HDL. Appears to interfere directly with fatty acid uptake and is also the major plasma inhibitor of cholesteryl ester transfer protein (CETP). Modulates the interaction of APOE with beta-migrating VLDL and inhibits binding of beta-VLDL to the LDL receptor-related protein. Binds free fatty acids and reduces their intracellular esterification. The protein is Apolipoprotein C-I (APOC1) of Myodes glareolus (Bank vole).